The primary structure comprises 602 residues: UvrABC system protein C (602 aa).

Positions Glu-19–Ile-97 constitute a GIY-YIG domain. The UVR domain maps to Ser-206–Val-241.

It belongs to the UvrC family. Interacts with UvrB in an incision complex.

It localises to the cytoplasm. In terms of biological role, the UvrABC repair system catalyzes the recognition and processing of DNA lesions. UvrC both incises the 5' and 3' sides of the lesion. The N-terminal half is responsible for the 3' incision and the C-terminal half is responsible for the 5' incision. The sequence is that of UvrABC system protein C from Aromatoleum aromaticum (strain DSM 19018 / LMG 30748 / EbN1) (Azoarcus sp. (strain EbN1)).